The chain runs to 36 residues: Photosystem I reaction center subunit VIII (36 aa).

A helical transmembrane segment spans residues 6-28; sequence FPSVLVPLVGLVFPAMAMASLSL.

Belongs to the PsaI family.

It is found in the plastid. The protein resides in the chloroplast thylakoid membrane. Its function is as follows. May help in the organization of the PsaL subunit. The protein is Photosystem I reaction center subunit VIII of Panax ginseng (Korean ginseng).